The following is a 146-amino-acid chain: Large ribosomal subunit protein uL15 (146 aa).

Residues M1–R18 show a composition bias toward basic and acidic residues. Residues M1–F50 form a disordered region. Positions R21 to S31 are enriched in gly residues.

It belongs to the universal ribosomal protein uL15 family. As to quaternary structure, part of the 50S ribosomal subunit.

Functionally, binds to the 23S rRNA. This chain is Large ribosomal subunit protein uL15, found in Listeria monocytogenes serotype 4b (strain CLIP80459).